Reading from the N-terminus, the 363-residue chain is Chorismate synthase (363 aa).

Arginine 48 contributes to the NADP(+) binding site. Residues 125-127 (RSS), 238-239 (NA), glycine 278, 293-297 (KPTAS), and arginine 319 contribute to the FMN site.

The protein belongs to the chorismate synthase family. In terms of assembly, homotetramer. The cofactor is FMNH2.

The enzyme catalyses 5-O-(1-carboxyvinyl)-3-phosphoshikimate = chorismate + phosphate. Its pathway is metabolic intermediate biosynthesis; chorismate biosynthesis; chorismate from D-erythrose 4-phosphate and phosphoenolpyruvate: step 7/7. Catalyzes the anti-1,4-elimination of the C-3 phosphate and the C-6 proR hydrogen from 5-enolpyruvylshikimate-3-phosphate (EPSP) to yield chorismate, which is the branch point compound that serves as the starting substrate for the three terminal pathways of aromatic amino acid biosynthesis. This reaction introduces a second double bond into the aromatic ring system. This chain is Chorismate synthase, found in Acinetobacter baumannii (strain SDF).